A 240-amino-acid polypeptide reads, in one-letter code: Aldehyde dehydrogenase, cytosolic 2 (240 aa).

Catalysis depends on residues Glu-8 and Cys-42. 4 positions are modified to N6-acetyllysine: Lys-106, Lys-149, Lys-151, and Lys-174.

It belongs to the aldehyde dehydrogenase family. In terms of assembly, homotetramer. In terms of tissue distribution, non-lens specific, predominant form expressed in the liver.

It localises to the cytoplasm. It carries out the reaction an aldehyde + NAD(+) + H2O = a carboxylate + NADH + 2 H(+). It functions in the pathway alcohol metabolism; ethanol degradation; acetate from ethanol: step 2/2. Functionally, elephant shrews, in contrast to other mammals, possess both a lens- and a non-lens specific class-1 aldehyde dehydrogenase. Can convert/oxidize retinaldehyde to retinoic acid. The protein is Aldehyde dehydrogenase, cytosolic 2 of Macroscelides proboscideus (Short-eared elephant shrew).